A 95-amino-acid polypeptide reads, in one-letter code: Protein S100-A10 (95 aa).

An N6-acetyllysine mark is found at K23, K28, K54, and K57. One can recognise an EF-hand domain in the interval 47–82 (KDPLAVDKIMKDLDQCRDGKVGFQSFLSLVAGLIIA). Positions 60-71 (DQCRDGKVGFQS) are ancestral calcium site.

The protein belongs to the S-100 family. As to quaternary structure, heterotetramer containing 2 light chains of S100A10/p11 and 2 heavy chains of ANXA2/p36. Interacts with SCN10A. Interacts with TASOR.

Functionally, because S100A10 induces the dimerization of ANXA2/p36, it may function as a regulator of protein phosphorylation in that the ANXA2 monomer is the preferred target (in vitro) of tyrosine-specific kinase. The polypeptide is Protein S100-A10 (S100a10) (Rattus norvegicus (Rat)).